The sequence spans 76 residues: Small ribosomal subunit protein bS18 (76 aa).

This sequence belongs to the bacterial ribosomal protein bS18 family. In terms of assembly, part of the 30S ribosomal subunit. Forms a tight heterodimer with protein bS6.

Binds as a heterodimer with protein bS6 to the central domain of the 16S rRNA, where it helps stabilize the platform of the 30S subunit. The protein is Small ribosomal subunit protein bS18 of Aeromonas hydrophila subsp. hydrophila (strain ATCC 7966 / DSM 30187 / BCRC 13018 / CCUG 14551 / JCM 1027 / KCTC 2358 / NCIMB 9240 / NCTC 8049).